The following is a 331-amino-acid chain: Hydroxyacylglutathione hydrolase 1, mitochondrial (331 aa).

The transit peptide at 1–76 (MPVISKASST…HFCSISNMPS (76 aa)) directs the protein to the mitochondrion. Positions 131 and 133 each coordinate Zn(2+). Positions 135 and 136 each coordinate Fe cation. 2 residues coordinate Zn(2+): histidine 189 and aspartate 208. Aspartate 208 contacts Fe cation. Position 246 to 248 (246 to 248 (REN)) interacts with substrate.

It belongs to the metallo-beta-lactamase superfamily. Glyoxalase II family. Requires Fe(2+) as cofactor. The cofactor is Fe(3+). Zn(2+) is required as a cofactor. As to expression, mainly expressed in roots, flowers and flower buds. Also detected in leaves.

Its subcellular location is the mitochondrion. It catalyses the reaction an S-(2-hydroxyacyl)glutathione + H2O = a 2-hydroxy carboxylate + glutathione + H(+). Its pathway is secondary metabolite metabolism; methylglyoxal degradation; (R)-lactate from methylglyoxal: step 2/2. In terms of biological role, thiolesterase that catalyzes the hydrolysis of S-D-lactoyl-glutathione to form glutathione and D-lactic acid. This Arabidopsis thaliana (Mouse-ear cress) protein is Hydroxyacylglutathione hydrolase 1, mitochondrial (GLX2-1).